The chain runs to 120 residues: Ribonuclease P protein component (120 aa).

It belongs to the RnpA family. In terms of assembly, consists of a catalytic RNA component (M1 or rnpB) and a protein subunit.

It catalyses the reaction Endonucleolytic cleavage of RNA, removing 5'-extranucleotides from tRNA precursor.. Functionally, RNaseP catalyzes the removal of the 5'-leader sequence from pre-tRNA to produce the mature 5'-terminus. It can also cleave other RNA substrates such as 4.5S RNA. The protein component plays an auxiliary but essential role in vivo by binding to the 5'-leader sequence and broadening the substrate specificity of the ribozyme. The polypeptide is Ribonuclease P protein component (Pseudoalteromonas atlantica (strain T6c / ATCC BAA-1087)).